The primary structure comprises 146 residues: VHWSAEEKQLITSLWAKVDVPEVGAATLGKMMVMYPWTQRFFAHFGNLSGPSALCGNPQVRAHGKKVLTSFGEALKHLDNVKETFAKLSELHFDKLHVDPENFKLLGNVLIIVLAGHHGKEFTPSTHASFQKLVNVVAHALARRYH.

The Globin domain occupies 2–146; it reads HWSAEEKQLI…VAHALARRYH (145 aa). 2 residues coordinate heme b: histidine 63 and histidine 92.

It belongs to the globin family. Heterotetramer of two alpha chains and two beta chains. As to expression, red blood cells.

Its function is as follows. Involved in oxygen transport from the lung to the various peripheral tissues. This is Hemoglobin subunit beta-2 (HBB2) from Naja naja (Indian cobra).